The chain runs to 208 residues: Large ribosomal subunit protein uL4 (208 aa).

Residues 47–84 (ARAARERSDVARTGKKFGRQKGGGTARHGDRRAPVFIG) are disordered. Basic and acidic residues predominate over residues 49 to 58 (AARERSDVAR).

The protein belongs to the universal ribosomal protein uL4 family. As to quaternary structure, part of the 50S ribosomal subunit.

In terms of biological role, one of the primary rRNA binding proteins, this protein initially binds near the 5'-end of the 23S rRNA. It is important during the early stages of 50S assembly. It makes multiple contacts with different domains of the 23S rRNA in the assembled 50S subunit and ribosome. Forms part of the polypeptide exit tunnel. This Rhizorhabdus wittichii (strain DSM 6014 / CCUG 31198 / JCM 15750 / NBRC 105917 / EY 4224 / RW1) (Sphingomonas wittichii) protein is Large ribosomal subunit protein uL4.